A 214-amino-acid chain; its full sequence is Methylthioribulose-1-phosphate dehydratase (214 aa).

Residues His103 and His105 each contribute to the Zn(2+) site.

Belongs to the aldolase class II family. MtnB subfamily. Zn(2+) is required as a cofactor.

The catalysed reaction is 5-(methylsulfanyl)-D-ribulose 1-phosphate = 5-methylsulfanyl-2,3-dioxopentyl phosphate + H2O. It participates in amino-acid biosynthesis; L-methionine biosynthesis via salvage pathway; L-methionine from S-methyl-5-thio-alpha-D-ribose 1-phosphate: step 2/6. Catalyzes the dehydration of methylthioribulose-1-phosphate (MTRu-1-P) into 2,3-diketo-5-methylthiopentyl-1-phosphate (DK-MTP-1-P). In Granulibacter bethesdensis (strain ATCC BAA-1260 / CGDNIH1), this protein is Methylthioribulose-1-phosphate dehydratase.